The sequence spans 517 residues: MAQKDMQDFDKIIVLDYGSQYNQLITRRIREFGIFSELLPNTTTAAEIKKIAPKGIIFSGGPMSVYDGGAFSVDPEIFELGIPILGICYGMQLISFKNGGNVEASTEREYGKAEITVTDKDSDLFKGLPEKQTVWMSHGDKVTAIPEGYVTVAESDNTPFTAIENRDKHIYGIQFHTEVQNTEFGNDILKNFAFGVCGAQDNWTMNDFIDMQIEKIREQVGDKKVLLGLSGGVDSSVVGVLLHRAIGDQLVSIFVDHGLLRKGEVEQVMESLGGKFGLNIIQVDAKERFMSKLAGVSDPEKKRKIIGNEFIQVFDEEATKLNGIDFLAQGTLYTDIIESGTSTATTIKSHHNVGGLPEDMQFSLIEPLNTLFKDEVRDLGEKLGMPYELVWRQPFPGPGLGIRVLGEVTEDKLKIVRDSDLILREEFALAGLDKTVWQYFTVLPGIRSVGVMGDGRTYDYTVGIRAVNSIDGMTADFSRIPWDILQKVSVRIVNEVDHVNRIVYDITSKPPSTVEWE.

A Glutamine amidotransferase type-1 domain is found at 11 to 202; that stretch reads KIIVLDYGSQ…AFGVCGAQDN (192 aa). The active-site Nucleophile is Cys-88. Catalysis depends on residues His-176 and Glu-178. Positions 203–392 constitute a GMPS ATP-PPase domain; sequence WTMNDFIDMQ…LGMPYELVWR (190 aa). 230-236 provides a ligand contact to ATP; sequence SGGVDSS.

In terms of assembly, homodimer.

It carries out the reaction XMP + L-glutamine + ATP + H2O = GMP + L-glutamate + AMP + diphosphate + 2 H(+). Its pathway is purine metabolism; GMP biosynthesis; GMP from XMP (L-Gln route): step 1/1. Its function is as follows. Catalyzes the synthesis of GMP from XMP. This is GMP synthase [glutamine-hydrolyzing] from Latilactobacillus sakei subsp. sakei (strain 23K) (Lactobacillus sakei subsp. sakei).